The chain runs to 349 residues: Protein Wnt-7a (349 aa).

The signal sequence occupies residues 1–31; it reads MNRKARRCLGHLFLSLGMVYLRIGGFSSVVA. 5 disulfide bridges follow: Cys73-Cys84, Cys123-Cys131, Cys133-Cys152, Cys200-Cys214, and Cys202-Cys209. Residues Asn83 and Asn127 are each glycosylated (N-linked (GlcNAc...) asparagine). A lipid anchor (O-palmitoleoyl serine; by PORCN) is attached at Ser206. A disordered linker region spans residues 238-266; it reads VEPVRASRNKRPTFLKIKKPLSYRKPMDT. 6 disulfides stabilise this stretch: Cys278/Cys309, Cys294/Cys304, Cys308/Cys348, Cys324/Cys339, Cys326/Cys336, and Cys331/Cys332. Residue Asn295 is glycosylated (N-linked (GlcNAc...) asparagine).

Belongs to the Wnt family. In terms of assembly, forms a soluble 1:1 complex with AFM; this prevents oligomerization and is required for prolonged biological activity. The complex with AFM may represent the physiological form in body fluids. Interacts with PORCN. Interacts (via intrinsically disordered linker region) with RECK; interaction with RECK confers ligand selectivity for Wnt7 in brain endothelial cells and allows these cells to selectively respond to Wnt7. Interacts with FZD5. Post-translationally, palmitoleoylation is required for efficient binding to frizzled receptors. Depalmitoleoylation leads to Wnt signaling pathway inhibition.

The protein localises to the secreted. It localises to the extracellular space. The protein resides in the extracellular matrix. In terms of biological role, ligand for members of the frizzled family of seven transmembrane receptors that functions in the canonical Wnt/beta-catenin signaling pathway. Plays an important role in embryonic development, including dorsal versus ventral patterning during limb development, skeleton development and urogenital tract development. Required for central nervous system (CNS) angiogenesis and blood-brain barrier regulation. Required for normal, sexually dimorphic development of the Mullerian ducts, and for normal fertility in both sexes. Required for normal neural stem cell proliferation in the hippocampus dentate gyrus. Required for normal progress through the cell cycle in neural progenitor cells, for self-renewal of neural stem cells, and for normal neuronal differentiation and maturation. Promotes formation of synapses via its interaction with FZD5. This chain is Protein Wnt-7a (WNT7A), found in Pongo pygmaeus (Bornean orangutan).